Reading from the N-terminus, the 249-residue chain is Aspartate/glutamate leucyltransferase (249 aa).

Belongs to the R-transferase family. Bpt subfamily.

The protein resides in the cytoplasm. The enzyme catalyses N-terminal L-glutamyl-[protein] + L-leucyl-tRNA(Leu) = N-terminal L-leucyl-L-glutamyl-[protein] + tRNA(Leu) + H(+). It carries out the reaction N-terminal L-aspartyl-[protein] + L-leucyl-tRNA(Leu) = N-terminal L-leucyl-L-aspartyl-[protein] + tRNA(Leu) + H(+). Functions in the N-end rule pathway of protein degradation where it conjugates Leu from its aminoacyl-tRNA to the N-termini of proteins containing an N-terminal aspartate or glutamate. The chain is Aspartate/glutamate leucyltransferase from Azorhizobium caulinodans (strain ATCC 43989 / DSM 5975 / JCM 20966 / LMG 6465 / NBRC 14845 / NCIMB 13405 / ORS 571).